The following is a 298-amino-acid chain: Probable GTP 3',8-cyclase (298 aa).

A Radical SAM core domain is found at 4–227 (RYGREIRSFR…MQNRKKYLID (224 aa)). Arg-13 lines the GTP pocket. Positions 20 and 24 each coordinate [4Fe-4S] cluster. Residue Tyr-26 coordinates S-adenosyl-L-methionine. Residue Cys-27 coordinates [4Fe-4S] cluster. Residue Lys-61 coordinates GTP. Gly-65 serves as a coordination point for S-adenosyl-L-methionine. Thr-91 provides a ligand contact to GTP. Position 115 (Ser-115) interacts with S-adenosyl-L-methionine. Lys-152 is a GTP binding site. [4Fe-4S] cluster is bound by residues Cys-243 and Cys-246. 248 to 250 (RIR) serves as a coordination point for GTP. Cys-260 is a binding site for [4Fe-4S] cluster.

Belongs to the radical SAM superfamily. MoaA family. It depends on [4Fe-4S] cluster as a cofactor.

The catalysed reaction is GTP + AH2 + S-adenosyl-L-methionine = (8S)-3',8-cyclo-7,8-dihydroguanosine 5'-triphosphate + 5'-deoxyadenosine + L-methionine + A + H(+). Its pathway is cofactor biosynthesis; molybdopterin biosynthesis. Catalyzes the cyclization of GTP to (8S)-3',8-cyclo-7,8-dihydroguanosine 5'-triphosphate. The protein is Probable GTP 3',8-cyclase of Methanococcus maripaludis (strain C5 / ATCC BAA-1333).